The following is a 282-amino-acid chain: Probable xyloglucan endotransglucosylase/hydrolase protein 18 (282 aa).

Residues 1-26 (MKLSCGTSFAFLIMFLFAAQSMHVYA) form the signal peptide. The 192-residue stretch at 27-218 (GSFHKDVQIH…WSKAPFTAFY (192 aa)) folds into the GH16 domain. The Nucleophile role is filled by Glu104. Catalysis depends on Glu108, which acts as the Proton donor. A xyloglucan-binding site is contributed by Glu108. An N-linked (GlcNAc...) asparagine glycan is attached at Asn112. Residues 121-123 (HTN), 131-133 (DKE), 197-198 (HW), and Gly202 contribute to the xyloglucan site. Cysteines 226 and 235 form a disulfide. Residue Asn238 is glycosylated (N-linked (GlcNAc...) asparagine). Cys267 and Cys281 are disulfide-bonded. Residue Arg272 coordinates xyloglucan.

Belongs to the glycosyl hydrolase 16 family. XTH group 2 subfamily. Contains at least one intrachain disulfide bond essential for its enzymatic activity. In terms of tissue distribution, root specific.

The protein resides in the secreted. It is found in the cell wall. It localises to the extracellular space. The protein localises to the apoplast. It catalyses the reaction breaks a beta-(1-&gt;4) bond in the backbone of a xyloglucan and transfers the xyloglucanyl segment on to O-4 of the non-reducing terminal glucose residue of an acceptor, which can be a xyloglucan or an oligosaccharide of xyloglucan.. In terms of biological role, catalyzes xyloglucan endohydrolysis (XEH) and/or endotransglycosylation (XET). Cleaves and religates xyloglucan polymers, an essential constituent of the primary cell wall, and thereby participates in cell wall construction of growing tissues. This is Probable xyloglucan endotransglucosylase/hydrolase protein 18 (XTH18) from Arabidopsis thaliana (Mouse-ear cress).